Consider the following 458-residue polypeptide: tRNA modification GTPase MnmE (458 aa).

Positions 26, 88, and 127 each coordinate (6S)-5-formyl-5,6,7,8-tetrahydrofolate. Positions 224-378 constitute a TrmE-type G domain; it reads GLSTAIIGRP…IEDRINQLFF (155 aa). Asparagine 234 serves as a coordination point for K(+). GTP is bound by residues 234–239, 253–259, and 278–281; these read NVGKSS, TDIAGTT, and DTAG. Residue serine 238 coordinates Mg(2+). The K(+) site is built by threonine 253, isoleucine 255, and threonine 258. Threonine 259 is a binding site for Mg(2+). Residue lysine 458 coordinates (6S)-5-formyl-5,6,7,8-tetrahydrofolate.

This sequence belongs to the TRAFAC class TrmE-Era-EngA-EngB-Septin-like GTPase superfamily. TrmE GTPase family. In terms of assembly, homodimer. Heterotetramer of two MnmE and two MnmG subunits. Requires K(+) as cofactor.

It localises to the cytoplasm. Its function is as follows. Exhibits a very high intrinsic GTPase hydrolysis rate. Involved in the addition of a carboxymethylaminomethyl (cmnm) group at the wobble position (U34) of certain tRNAs, forming tRNA-cmnm(5)s(2)U34. The polypeptide is tRNA modification GTPase MnmE (Streptococcus pyogenes serotype M3 (strain ATCC BAA-595 / MGAS315)).